Here is a 186-residue protein sequence, read N- to C-terminus: Dehydrin Rab18 (186 aa).

Residues 1–186 (MASYQNRPGG…IKEKLPGGGR (186 aa)) form a disordered region. The span at 30 to 85 (PMGGGGYGTGGGGGATGGQGYGTGGQGYGSGGQGYGTGGQGYGTGTGTEGFGTGGG) shows a compositional bias: gly residues. The span at 89–98 (HGQEQLHKES) shows a compositional bias: basic and acidic residues. Low complexity predominate over residues 105 to 116 (MLHRSGSGSSSS). Residues 133-144 (KIKEKLPGHHDQ) show a composition bias toward basic and acidic residues. The segment covering 152–164 (GGMGSGYDAGGYG) has biased composition (gly residues). Residues 165–186 (GEHHEKKGMMDKIKEKLPGGGR) show a composition bias toward basic and acidic residues.

Belongs to the plant dehydrin family.

The polypeptide is Dehydrin Rab18 (RAB18) (Arabidopsis thaliana (Mouse-ear cress)).